A 629-amino-acid polypeptide reads, in one-letter code: Probable indole-3-acetic acid-amido synthetase GH3.4 (629 aa).

It belongs to the IAA-amido conjugating enzyme family. In terms of tissue distribution, expressed in flowers.

Functionally, may catalyze the synthesis of indole-3-acetic acid (IAA)-amino acid conjugates, providing a mechanism for the plant to cope with the presence of excess auxin. This Oryza sativa subsp. japonica (Rice) protein is Probable indole-3-acetic acid-amido synthetase GH3.4 (GH3.4).